Here is a 494-residue protein sequence, read N- to C-terminus: UPF0371 protein STER_1332 (494 aa).

It belongs to the UPF0371 family.

This chain is UPF0371 protein STER_1332, found in Streptococcus thermophilus (strain ATCC BAA-491 / LMD-9).